Here is a 465-residue protein sequence, read N- to C-terminus: E3 ubiquitin-protein ligase TRIM15 (465 aa).

The segment at C16–Q61 adopts an RING-type zinc-finger fold. The B box-type zinc finger occupies L78–L119. Zn(2+) is bound by residues C83, H86, C105, and H111. Positions Y126–Q229 form a coiled coil. The region spanning E276–G465 is the B30.2/SPRY domain.

It belongs to the TRIM/RBCC family. In terms of assembly, interacts with paxillin/PXN; this interaction recruits TRIM15 to focal adhesions. Interacts with TRIM8; this interaction prevents TRIM8 cytoplasmic translocation.

It localises to the cytoplasm. It is found in the nucleus. The protein localises to the cell junction. Its subcellular location is the focal adhesion. It carries out the reaction S-ubiquitinyl-[E2 ubiquitin-conjugating enzyme]-L-cysteine + [acceptor protein]-L-lysine = [E2 ubiquitin-conjugating enzyme]-L-cysteine + N(6)-ubiquitinyl-[acceptor protein]-L-lysine.. Functionally, E3 ubiquitin ligase that plays a role in several processes including innate antiviral immnity, cell migration and chemotaxis. Acts as a 'Lys-63'-specific ubiquitin ligase for MAPK1/ERK2 and MAPK3/ERK1, promoting their activation by facilitating their interaction with MAP2K1 and MAP2K2. Also plays a role in cell migration and chemotaxis by acting as a stable focal adhesion component upon recruitment by multi-adapter protein paxillin/PXN. Functions in the RIGI-mediated interferon induction pathway upstream or at the level of MAVS. Inhibits NF-kappa-B activation by turnover of 'Lys-63'-linked ubiquitination of MAP3K7/TAK1. Mechanistically, prevents TRIM8 cytoplasmic translocation and thus inhibits TRIM8-mediated 'Lys-63'-linked polyubiquitination of MAP3K7/TAK1 in the cytoplasm. Also has an important regulatory effect on the activation of hepatic stellate cells (HSCs). This chain is E3 ubiquitin-protein ligase TRIM15 (TRIM15), found in Macaca mulatta (Rhesus macaque).